A 445-amino-acid polypeptide reads, in one-letter code: 2-oxoisovalerate dehydrogenase subunit alpha, mitochondrial (445 aa).

A mitochondrion-targeting transit peptide spans 1–45 (MAVAIAAARVWRPNRGLSQAALLLLWRPGARGLARSHPHRQQQQF). 2 residues coordinate thiamine diphosphate: tyrosine 158 and arginine 159. Serine 206 contributes to the K(+) binding site. Serine 207 lines the thiamine diphosphate pocket. Positions 208, 211, and 212 each coordinate K(+). Glutamate 238 contributes to the Mg(2+) binding site. The thiamine diphosphate site is built by glycine 239, alanine 240, and arginine 265. Mg(2+) is bound by residues asparagine 267 and tyrosine 269. Histidine 336 provides a ligand contact to thiamine diphosphate. Serine 337 carries the phosphoserine; by BCKDK modification. The residue at position 338 (threonine 338) is a Phosphothreonine. Serine 339 and serine 347 each carry phosphoserine. N6-acetyllysine; alternate is present on lysine 356. At lysine 356 the chain carries N6-succinyllysine; alternate. At lysine 380 the chain carries N6-succinyllysine.

It belongs to the BCKDHA family. In terms of assembly, heterotetramer of 2 alpha/BCKDHA and 2 beta chains/BCKDHB that forms the branched-chain alpha-keto acid decarboxylase (E1) component of the BCKD complex. The branched-chain alpha-ketoacid dehydrogenase is a large complex composed of three major building blocks E1, E2 and E3. It is organized around E2, a 24-meric cubic core composed of DBT, to which are associated 6 to 12 copies of E1, and approximately 6 copies of the dehydrogenase E3, a DLD dimer. Interacts with PPM1K. Thiamine diphosphate serves as cofactor. Requires Mg(2+) as cofactor. Phosphorylated at Ser-337 by BCKDK and dephosphorylated by protein phosphatase PPM1K.

Its subcellular location is the mitochondrion matrix. The enzyme catalyses N(6)-[(R)-lipoyl]-L-lysyl-[protein] + 3-methyl-2-oxobutanoate + H(+) = N(6)-[(R)-S(8)-2-methylpropanoyldihydrolipoyl]-L-lysyl-[protein] + CO2. Functionally, together with BCKDHB forms the heterotetrameric E1 subunit of the mitochondrial branched-chain alpha-ketoacid dehydrogenase (BCKD) complex. The BCKD complex catalyzes the multi-step oxidative decarboxylation of alpha-ketoacids derived from the branched-chain amino-acids valine, leucine and isoleucine producing CO2 and acyl-CoA which is subsequently utilized to produce energy. The E1 subunit catalyzes the first step with the decarboxylation of the alpha-ketoacid forming an enzyme-product intermediate. A reductive acylation mediated by the lipoylamide cofactor of E2 extracts the acyl group from the E1 active site for the next step of the reaction. In Macaca fascicularis (Crab-eating macaque), this protein is 2-oxoisovalerate dehydrogenase subunit alpha, mitochondrial (BCKDHA).